We begin with the raw amino-acid sequence, 203 residues long: Na(+)-translocating NADH-quinone reductase subunit E (203 aa).

The next 6 membrane-spanning stretches (helical) occupy residues 11-31 (SIFIENMALSFFLGMCTFLAV), 35-55 (ISTAIGLGTAVIVVQTLTVPL), 82-102 (FLGLIAYIGVIAAVVQILEMF), 115-135 (GIFLPLITVNCAILAGSLFMV), 145-165 (MVYGVGSGVGWALAIAVMAGV), and 181-201 (LGITFITAGLMAIGFMSFSGI).

This sequence belongs to the NqrDE/RnfAE family. Composed of six subunits; NqrA, NqrB, NqrC, NqrD, NqrE and NqrF.

Its subcellular location is the cell inner membrane. It carries out the reaction a ubiquinone + n Na(+)(in) + NADH + H(+) = a ubiquinol + n Na(+)(out) + NAD(+). In terms of biological role, NQR complex catalyzes the reduction of ubiquinone-1 to ubiquinol by two successive reactions, coupled with the transport of Na(+) ions from the cytoplasm to the periplasm. NqrA to NqrE are probably involved in the second step, the conversion of ubisemiquinone to ubiquinol. This is Na(+)-translocating NADH-quinone reductase subunit E from Dichelobacter nodosus (strain VCS1703A).